The chain runs to 425 residues: Enolase (425 aa).

Glutamine 162 contacts (2R)-2-phosphoglycerate. Glutamate 204 acts as the Proton donor in catalysis. The Mg(2+) site is built by aspartate 241, glutamate 282, and aspartate 309. The (2R)-2-phosphoglycerate site is built by lysine 334, arginine 363, serine 364, and lysine 385. Catalysis depends on lysine 334, which acts as the Proton acceptor.

It belongs to the enolase family. Requires Mg(2+) as cofactor.

It localises to the cytoplasm. The protein localises to the secreted. The protein resides in the cell surface. It catalyses the reaction (2R)-2-phosphoglycerate = phosphoenolpyruvate + H2O. Its pathway is carbohydrate degradation; glycolysis; pyruvate from D-glyceraldehyde 3-phosphate: step 4/5. In terms of biological role, catalyzes the reversible conversion of 2-phosphoglycerate (2-PG) into phosphoenolpyruvate (PEP). It is essential for the degradation of carbohydrates via glycolysis. In Corynebacterium glutamicum (strain R), this protein is Enolase.